The chain runs to 403 residues: Chorismate synthase (403 aa).

Arg-40 and Arg-46 together coordinate NADP(+). Residues 140–142 (RSS) and 261–262 (QA) contribute to the FMN site. Positions 277–298 (RRGSEAHDEMVRTDEGVDRETN) are enriched in basic and acidic residues. The disordered stretch occupies residues 277–307 (RRGSEAHDEMVRTDEGVDRETNRAGGLEGGM). FMN contacts are provided by residues Gly-305, 320 to 324 (KPIST), and Arg-346.

This sequence belongs to the chorismate synthase family. Homotetramer. It depends on FMNH2 as a cofactor.

The enzyme catalyses 5-O-(1-carboxyvinyl)-3-phosphoshikimate = chorismate + phosphate. It functions in the pathway metabolic intermediate biosynthesis; chorismate biosynthesis; chorismate from D-erythrose 4-phosphate and phosphoenolpyruvate: step 7/7. Functionally, catalyzes the anti-1,4-elimination of the C-3 phosphate and the C-6 proR hydrogen from 5-enolpyruvylshikimate-3-phosphate (EPSP) to yield chorismate, which is the branch point compound that serves as the starting substrate for the three terminal pathways of aromatic amino acid biosynthesis. This reaction introduces a second double bond into the aromatic ring system. In Corynebacterium aurimucosum (strain ATCC 700975 / DSM 44827 / CIP 107346 / CN-1) (Corynebacterium nigricans), this protein is Chorismate synthase.